Reading from the N-terminus, the 433-residue chain is Voltage-gated potassium channel regulatory subunit KCNG3 (433 aa).

The Cytoplasmic portion of the chain corresponds to 1-165 (MTFGRGGAAS…RTFEEPTSSL (165 aa)). A helical membrane pass occupies residues 166 to 187 (AAQILASVSVVFVIVSMVVLCA). Residues 188-217 (STLPDWRAAVADNRSLDDRSRYSASPGREP) are Extracellular-facing. The chain crosses the membrane as a helical span at residues 218–239 (SGIIEAICIGWFTAECIVRFIV). Residues 240-250 (SKNKCEFVKRP) lie on the Cytoplasmic side of the membrane. The chain crosses the membrane as a helical span at residues 251 to 271 (LNIIDLLAITPYYISVLMTVF). Over 272 to 281 (TGENSQLQRA) the chain is Extracellular. Residues 282–302 (GVTLRVLRMMRIFWVIKLARH) traverse the membrane as a helical; Voltage-sensor segment. The Cytoplasmic portion of the chain corresponds to 303 to 317 (FIGLQTLGLTLKRCY). The helical transmembrane segment at 318–339 (REMAMLLVFICVAMAIFSALSQ) threads the bilayer. Topologically, residues 340–357 (LLEHGLDLETSNKDFASI) are extracellular. The segment at residues 358 to 369 (PAACWWVIISMT) is an intramembrane region (helical). The Selectivity filter signature appears at 370-375 (TVGYGD). The stretch at 370–377 (TVGYGDMY) is an intramembrane region. The Extracellular segment spans residues 378–384 (PITVPGR). A helical membrane pass occupies residues 385–413 (ILGGVCVVSGIVLLALPITFIYHSFVQCY). Residues 414–433 (HELKFRSARYSRSLSAEFLN) are Cytoplasmic-facing.

Belongs to the potassium channel family. G (TC 1.A.1.2) subfamily. Kv6.3/KCNG3 sub-subfamily. As to quaternary structure, heterotetramer with KCNB1. Does not form homomultimers.

It is found in the cell membrane. It localises to the cytoplasm. Functionally, regulatory subunit of the voltage-gated potassium (Kv) channel which, when coassembled with KCNB1, modulates the kinetics parameters of the heterotetrameric channel namely the inactivation and deactivation rate. Potassium channel subunit that does not form functional channels by itself. Reduces the deactivation rate. Moderately acceleratee activation. The chain is Voltage-gated potassium channel regulatory subunit KCNG3 from Mus musculus (Mouse).